Here is a 208-residue protein sequence, read N- to C-terminus: Putative 3-methyladenine DNA glycosylase (208 aa).

Belongs to the DNA glycosylase MPG family.

The polypeptide is Putative 3-methyladenine DNA glycosylase (Lactobacillus johnsonii (strain CNCM I-12250 / La1 / NCC 533)).